Consider the following 153-residue polypeptide: Large ribosomal subunit protein uL22 (153 aa).

The protein belongs to the universal ribosomal protein uL22 family. As to quaternary structure, part of the 50S ribosomal subunit.

Functionally, this protein binds specifically to 23S rRNA. It makes multiple contacts with different domains of the 23S rRNA in the assembled 50S subunit and ribosome. The globular domain of the protein is located near the polypeptide exit tunnel on the outside of the subunit, while an extended beta-hairpin is found that lines the wall of the exit tunnel in the center of the 70S ribosome. The sequence is that of Large ribosomal subunit protein uL22 from Methanococcus aeolicus (strain ATCC BAA-1280 / DSM 17508 / OCM 812 / Nankai-3).